The following is a 204-amino-acid chain: Probable GTP-binding protein EngB (204 aa).

Positions 27–201 (SGIEIAFAGR…SEKLDQWFSP (175 aa)) constitute an EngB-type G domain. GTP-binding positions include 35 to 42 (GRSNAGKS), 62 to 66 (GRTQL), 80 to 83 (DLPG), 147 to 150 (TKAD), and 180 to 182 (FSA). Mg(2+) contacts are provided by Ser42 and Thr64.

It belongs to the TRAFAC class TrmE-Era-EngA-EngB-Septin-like GTPase superfamily. EngB GTPase family. The cofactor is Mg(2+).

Its function is as follows. Necessary for normal cell division and for the maintenance of normal septation. This Histophilus somni (strain 129Pt) (Haemophilus somnus) protein is Probable GTP-binding protein EngB.